The following is a 139-amino-acid chain: Large ribosomal subunit protein uL16 (139 aa).

The segment covering 1 to 21 (MLSPRKTKFRKQHRGRMRGKA) has biased composition (basic residues). The disordered stretch occupies residues 1–23 (MLSPRKTKFRKQHRGRMRGKATR).

This sequence belongs to the universal ribosomal protein uL16 family. In terms of assembly, part of the 50S ribosomal subunit.

Functionally, binds 23S rRNA and is also seen to make contacts with the A and possibly P site tRNAs. In Acaryochloris marina (strain MBIC 11017), this protein is Large ribosomal subunit protein uL16.